A 113-amino-acid chain; its full sequence is Putative pterin-4-alpha-carbinolamine dehydratase (113 aa).

This sequence belongs to the pterin-4-alpha-carbinolamine dehydratase family.

It catalyses the reaction (4aS,6R)-4a-hydroxy-L-erythro-5,6,7,8-tetrahydrobiopterin = (6R)-L-erythro-6,7-dihydrobiopterin + H2O. In Bordetella bronchiseptica (strain ATCC BAA-588 / NCTC 13252 / RB50) (Alcaligenes bronchisepticus), this protein is Putative pterin-4-alpha-carbinolamine dehydratase.